A 317-amino-acid chain; its full sequence is Ubiquinone biosynthesis protein COQ9, mitochondrial (317 aa).

A mitochondrion-targeting transit peptide spans M1–R46. The segment at L45 to Q97 is disordered. Residues A85–E96 show a composition bias toward acidic residues. An a 1,2-diacylglycero-3-phosphoethanolamine-binding site is contributed by R243.

Belongs to the COQ9 family. In terms of assembly, homodimer. Heterodimer; two heterodimers of COQ7:COQ9 come together on the same side of the lipid pseudo-bilayer and form a curved tetramer with a hydrophobic surface suitable for membrane interaction. These two tetramers assemble into a soluble octamer with a pseudo-bilayer of lipids captured within. Interacts with COQ7; this interaction allows ubiquinone (CoQ) isoprene intermediates presentation to COQ7 and facilitates the COQ7-mediated hydroxylase step.

The protein resides in the mitochondrion. The protein operates within cofactor biosynthesis; ubiquinone biosynthesis. In terms of biological role, membrane-associated protein that warps the membrane surface to access and bind aromatic isoprenes with high specificity, including ubiquinone (CoQ) isoprene intermediates and presents them directly to COQ7, therefore facilitating the COQ7-mediated hydroxylase step. Participates in the biosynthesis of coenzyme Q, also named ubiquinone, an essential lipid-soluble electron transporter for aerobic cellular respiration. This Xenopus tropicalis (Western clawed frog) protein is Ubiquinone biosynthesis protein COQ9, mitochondrial.